Here is a 91-residue protein sequence, read N- to C-terminus: Small integral membrane protein 12-B (91 aa).

The helical transmembrane segment at 12–34 (YAPYITFPVAFVVGAVGYQLEWF) threads the bilayer.

This sequence belongs to the SMIM12 family.

The protein resides in the membrane. The polypeptide is Small integral membrane protein 12-B (smim12-b) (Xenopus laevis (African clawed frog)).